A 185-amino-acid chain; its full sequence is MKRLLENSLETCPIVKRGPYHYFIHPISDGVPLVEPELLRDVSTRVIKMIDTNVDKIVTAEAMGIPIVTAVSIATDIPYVIMRKREYLLEGEVPVHQETGYSKGELYLNGINKGDKVVILDDVISTGGTLVAIIRALKRAGADIKDVVCIIDRGQGKNIVEKETGYKVKTLVKIEVVDGKVKILE.

The protein belongs to the purine/pyrimidine phosphoribosyltransferase family. Archaeal HPRT subfamily. As to quaternary structure, homodimer.

The protein resides in the cytoplasm. It catalyses the reaction IMP + diphosphate = hypoxanthine + 5-phospho-alpha-D-ribose 1-diphosphate. The enzyme catalyses GMP + diphosphate = guanine + 5-phospho-alpha-D-ribose 1-diphosphate. It participates in purine metabolism; IMP biosynthesis via salvage pathway; IMP from hypoxanthine: step 1/1. Catalyzes a salvage reaction resulting in the formation of IMP that is energically less costly than de novo synthesis. The sequence is that of Hypoxanthine/guanine phosphoribosyltransferase from Methanococcus vannielii (strain ATCC 35089 / DSM 1224 / JCM 13029 / OCM 148 / SB).